An 83-amino-acid chain; its full sequence is MGVFQILMKNKELIPLAFFISVAATGATSFALYALKKTDVVIDRKRNPEPWEMVDPTQPQKLITINQQWKPVEELQKVRRATR.

The protein belongs to the complex I NDUFA4 subunit family. In terms of tissue distribution, strongly expressed in vertebrae, brain, intestine and stomach.

It localises to the nucleus. This Mus musculus (Mouse) protein is Normal mucosa of esophagus-specific gene 1 protein (Nmes1).